Consider the following 90-residue polypeptide: NELL2-interacting cell ontogeny regulator 1 (90 aa).

The first 28 residues, 1–28 (MAPALRSLLSPRTLLLLLLSLALLGARA), serve as a signal peptide directing secretion.

This sequence belongs to the NICOL family. Interacts with NELL2; triggers epididymal differentiation. Interacts with cell surface receptor TFRC; the interaction mediates uptake of NICOL1 into fibroblasts. In terms of tissue distribution, expression is enriched in both male and female reproductive organs, including the testis, epididymis, seminal vesicles, coagulating glands, ovary and uterus, and in various non-reproductive organs such as brain, thymus and liver. In testis, expressed in both germ cells and Sertoli cells. Also expressed at low levels in the kidney. Expressed during neocortex and cerebellum development.

Its subcellular location is the secreted. It is found in the cytoplasm. The protein resides in the perinuclear region. Its function is as follows. mRNA-binding protein which interacts with a range of target mRNAs including SERPINE1, ACTA2, CCN2 and COL4A1 and may promote extracellular matrix production. Binds to the 3'-UTR of SERPINE1 mRNA and stabilizes the mRNA, possibly by competing for binding with SERBP1 and preventing SERBP1-mediated mRNA degradation. Also binds to the 3'-UTR of ACTA2. Testis-derived lumicrine factor that triggers epididymal differentiation and sperm maturation. The polypeptide is NELL2-interacting cell ontogeny regulator 1 (Mus musculus (Mouse)).